Here is a 182-residue protein sequence, read N- to C-terminus: Large ribosomal subunit protein bL25 (182 aa).

The protein belongs to the bacterial ribosomal protein bL25 family. CTC subfamily. In terms of assembly, part of the 50S ribosomal subunit; part of the 5S rRNA/L5/L18/L25 subcomplex. Contacts the 5S rRNA. Binds to the 5S rRNA independently of L5 and L18.

Its function is as follows. This is one of the proteins that binds to the 5S RNA in the ribosome where it forms part of the central protuberance. In Borreliella burgdorferi (strain ATCC 35210 / DSM 4680 / CIP 102532 / B31) (Borrelia burgdorferi), this protein is Large ribosomal subunit protein bL25.